The following is a 532-amino-acid chain: P granule abnormality protein 2 (532 aa).

As to quaternary structure, interacts with pgl-1 and pgl-3; association with either pgl-1 or pgl-3 is not required for P-granule localization. Highly expressed in the germline.

The protein localises to the cytoplasmic granule. Functionally, transient component of P-granule which is involved in germline development. The polypeptide is P granule abnormality protein 2 (Caenorhabditis elegans).